Reading from the N-terminus, the 123-residue chain is Sperm-associated antigen 11A (123 aa).

A signal peptide spans 1–25 (MRQRLLPSVTSLLLVALLFPGSSQA). N-linked (GlcNAc...) asparagine glycosylation occurs at Asn-29.

The protein belongs to the SPAG11 family.

It localises to the secreted. Functionally, has antimicrobial activity against E.coli. Plays a role in the defense response in the male reproductive tract, contributing to sperm maturation, storage and protection. The protein is Sperm-associated antigen 11A of Homo sapiens (Human).